A 463-amino-acid polypeptide reads, in one-letter code: Retinoic acid receptor RXR-gamma (463 aa).

Residues 1 to 138 are modulating; that stretch reads MYGNYSHFMK…TSPGSLVKHI (138 aa). The segment at 16–53 is disordered; sequence GGSPGHTGSTSMSPSVALPTGKPMDSHPSYTDTPVSAP. 2 consecutive NR C4-type zinc fingers follow at residues 139 to 159 and 175 to 199; these read CAIC…CEGC and CRDN…YQKC. A DNA-binding region (nuclear receptor) is located at residues 139–204; it reads CAICGDRSSG…RYQKCLVMGM (66 aa). A hinge region spans residues 205–230; it reads KREAVQEERQRSRERAESEAECASTG. The NR LBD domain occupies 231–459; that stretch reads HEDMPVERIL…TFLMEMLETP (229 aa).

This sequence belongs to the nuclear hormone receptor family. NR2 subfamily. Homodimer. Heterodimer with a RAR molecule. Binds DNA preferentially as a RAR/RXR heterodimer. Interacts with RARA. In terms of processing, acetylated by EP300. Expressed in the liver, but not detected in the adrenal gland (at protein level). Restricted expression in adrenal gland, kidney, liver, brain and lungs. Strong expression in heart and muscles.

Its subcellular location is the nucleus. It is found in the cytoplasm. In terms of biological role, receptor for retinoic acid. Retinoic acid receptors bind as heterodimers to their target response elements in response to their ligands, all-trans or 9-cis retinoic acid, and regulate gene expression in various biological processes. The RAR/RXR heterodimers bind to the retinoic acid response elements (RARE) composed of tandem 5'-AGGTCA-3' sites known as DR1-DR5. The high affinity ligand for RXRs is 9-cis retinoic acid. This Rattus norvegicus (Rat) protein is Retinoic acid receptor RXR-gamma (Rxrg).